Here is a 2292-residue protein sequence, read N- to C-terminus: Protein Ycf2 (2292 aa).

ATP is bound at residue G1644–S1651.

The protein belongs to the Ycf2 family.

It localises to the plastid. It is found in the chloroplast stroma. In terms of biological role, probable ATPase of unknown function. Its presence in a non-photosynthetic plant (Epifagus virginiana) and experiments in tobacco indicate that it has an essential function which is probably not related to photosynthesis. This Morus indica (Mulberry) protein is Protein Ycf2.